The chain runs to 947 residues: Transcriptional regulator WAR1 (947 aa).

Over residues 1–10 the composition is skewed to basic and acidic residues; it reads MSDTTPEKGS. The tract at residues 1–52 is disordered; that stretch reads MSDTTPEKGSVDSVSPSASNGSNTNNPLNNSSPQPLKSNESDKKPKVTRRSV. A compositionally biased stretch (low complexity) spans 19-38; that stretch reads SNGSNTNNPLNNSSPQPLKS. The segment at residues 54 to 86 is a DNA-binding region (zn(2)-C6 fungal-type); the sequence is CKSCHSLKVKCTPSDPNNPSAPCVRCINANRIC. Residues 96-222 form a disordered region; it reads RRKKSEILEA…SPTSKDDEIN (127 aa). Residues 129-142 are compositionally biased toward low complexity; sequence NSSENYSSSINNAN. Composition is skewed to polar residues over residues 143-158 and 167-185; these read DSSL…TFDP and QASS…QSAA.

In terms of assembly, homodimer.

The protein localises to the nucleus. Its function is as follows. Transcription factor required for yeast cell adherence to silicone substrate. Plays a role in resistance to weak organic acids such as acetate and sorbate. Binds in vitro to a nitric oxide-responsive element (NORE) but seems not to be involved in response to nitrosative stress. This is Transcriptional regulator WAR1 (WAR1) from Candida albicans (strain SC5314 / ATCC MYA-2876) (Yeast).